The sequence spans 521 residues: Beta-glucosidase 6 (521 aa).

Positions 1–38 (MGRIKSSSGRCSTARLEAVAVLVVVFGVASSSLRGCIA) are cleaved as a signal peptide. Residues Gln64, His165, and 210 to 211 (NE) each bind a beta-D-glucoside. Glu211 (proton donor) is an active-site residue. The cysteines at positions 230 and 238 are disulfide-linked. A glycan (N-linked (GlcNAc...) asparagine) is linked at Asn291. Tyr354 lines the a beta-D-glucoside pocket. Residues Asn362 and Asn372 are each glycosylated (N-linked (GlcNAc...) asparagine). A beta-D-glucoside-binding positions include Glu427, Trp477, 484–485 (EW), and Phe493. Catalysis depends on Glu427, which acts as the Nucleophile.

This sequence belongs to the glycosyl hydrolase 1 family. Homodimer.

It is found in the secreted. The enzyme catalyses Hydrolysis of terminal, non-reducing beta-D-glucosyl residues with release of beta-D-glucose.. In terms of biological role, hydrolyzes glycosides, oligosaccharides and hydrophobic glycosides. Possesses gibberellin ester beta-D-glucosidase activity. Can hydrolyze gibberellin A4 beta-D-glucosyl ester in vitro. In Oryza sativa subsp. japonica (Rice), this protein is Beta-glucosidase 6.